A 503-amino-acid polypeptide reads, in one-letter code: ATP synthase subunit alpha (503 aa).

Residue glycine 170–threonine 177 participates in ATP binding.

Belongs to the ATPase alpha/beta chains family. In terms of assembly, F-type ATPases have 2 components, CF(1) - the catalytic core - and CF(0) - the membrane proton channel. CF(1) has five subunits: alpha(3), beta(3), gamma(1), delta(1), epsilon(1). CF(0) has three main subunits: a(1), b(2) and c(9-12). The alpha and beta chains form an alternating ring which encloses part of the gamma chain. CF(1) is attached to CF(0) by a central stalk formed by the gamma and epsilon chains, while a peripheral stalk is formed by the delta and b chains.

The protein resides in the cell inner membrane. The catalysed reaction is ATP + H2O + 4 H(+)(in) = ADP + phosphate + 5 H(+)(out). Functionally, produces ATP from ADP in the presence of a proton gradient across the membrane. The alpha chain is a regulatory subunit. The sequence is that of ATP synthase subunit alpha from Helicobacter acinonychis (strain Sheeba).